The chain runs to 139 residues: D-ribose pyranase (139 aa).

Catalysis depends on His20, which acts as the Proton donor. Substrate is bound by residues Asp28, His106, and 128-130 (YAN).

It belongs to the RbsD / FucU family. RbsD subfamily. In terms of assembly, homodecamer.

The protein resides in the cytoplasm. It catalyses the reaction beta-D-ribopyranose = beta-D-ribofuranose. The protein operates within carbohydrate metabolism; D-ribose degradation; D-ribose 5-phosphate from beta-D-ribopyranose: step 1/2. Its function is as follows. Catalyzes the interconversion of beta-pyran and beta-furan forms of D-ribose. The protein is D-ribose pyranase of Haemophilus influenzae (strain PittGG).